A 277-amino-acid polypeptide reads, in one-letter code: Hydroxypyruvate/pyruvate aldolase (277 aa).

Catalysis depends on H54, which acts as the Proton acceptor. Residues E158 and D184 each coordinate a divalent metal cation.

Belongs to the HpcH/HpaI aldolase family. A divalent metal cation is required as a cofactor.

The catalysed reaction is D-glyceraldehyde + 3-hydroxypyruvate = (3R,4S,5R)-3,4,5,6-tetrahydroxy-2-oxohexanoate. It carries out the reaction D-glyceraldehyde + 3-hydroxypyruvate = 2-dehydro-D-gluconate. It catalyses the reaction D-glyceraldehyde + 3-hydroxypyruvate = 2-dehydro-D-galactonate. The enzyme catalyses D-glyceraldehyde + pyruvate = 2-dehydro-3-deoxy-L-galactonate. Aldolase which can catalyze in vitro the aldolisation reaction between hydroxypyruvate (HPA) or pyruvate (PA) and D-glyceraldehyde (D-GA). The condensation of hydroxypyruvate and D-glyceraldehyde produces (3R,4S,5R)-3,4,5,6-tetrahydroxy-2-oxohexanoate as the major product, 2-dehydro-D-gluconate and 2-dehydro-D-galactonate. The condensation of pyruvate and D-glyceraldehyde produces 2-dehydro-3-deoxy-L-galactonate as the major product. This is Hydroxypyruvate/pyruvate aldolase from Deinococcus radiodurans (strain ATCC 13939 / DSM 20539 / JCM 16871 / CCUG 27074 / LMG 4051 / NBRC 15346 / NCIMB 9279 / VKM B-1422 / R1).